We begin with the raw amino-acid sequence, 572 residues long: Proline--tRNA ligase (572 aa).

This sequence belongs to the class-II aminoacyl-tRNA synthetase family. ProS type 1 subfamily. Homodimer.

The protein resides in the cytoplasm. The catalysed reaction is tRNA(Pro) + L-proline + ATP = L-prolyl-tRNA(Pro) + AMP + diphosphate. Functionally, catalyzes the attachment of proline to tRNA(Pro) in a two-step reaction: proline is first activated by ATP to form Pro-AMP and then transferred to the acceptor end of tRNA(Pro). As ProRS can inadvertently accommodate and process non-cognate amino acids such as alanine and cysteine, to avoid such errors it has two additional distinct editing activities against alanine. One activity is designated as 'pretransfer' editing and involves the tRNA(Pro)-independent hydrolysis of activated Ala-AMP. The other activity is designated 'posttransfer' editing and involves deacylation of mischarged Ala-tRNA(Pro). The misacylated Cys-tRNA(Pro) is not edited by ProRS. In Escherichia coli O157:H7, this protein is Proline--tRNA ligase.